Consider the following 423-residue polypeptide: Serine--tRNA ligase (423 aa).

Residue 231–233 participates in L-serine binding; the sequence is TAE. 262-264 contacts ATP; it reads RSE. Residue Glu285 participates in L-serine binding. 349–352 contributes to the ATP binding site; it reads EISS. Ser384 provides a ligand contact to L-serine.

The protein belongs to the class-II aminoacyl-tRNA synthetase family. Type-1 seryl-tRNA synthetase subfamily. Homodimer. The tRNA molecule binds across the dimer.

The protein resides in the cytoplasm. The catalysed reaction is tRNA(Ser) + L-serine + ATP = L-seryl-tRNA(Ser) + AMP + diphosphate + H(+). It carries out the reaction tRNA(Sec) + L-serine + ATP = L-seryl-tRNA(Sec) + AMP + diphosphate + H(+). It participates in aminoacyl-tRNA biosynthesis; selenocysteinyl-tRNA(Sec) biosynthesis; L-seryl-tRNA(Sec) from L-serine and tRNA(Sec): step 1/1. Catalyzes the attachment of serine to tRNA(Ser). Is also able to aminoacylate tRNA(Sec) with serine, to form the misacylated tRNA L-seryl-tRNA(Sec), which will be further converted into selenocysteinyl-tRNA(Sec). This Acinetobacter baylyi (strain ATCC 33305 / BD413 / ADP1) protein is Serine--tRNA ligase.